A 127-amino-acid polypeptide reads, in one-letter code: Large ribosomal subunit protein bL12 (127 aa).

The protein belongs to the bacterial ribosomal protein bL12 family. Homodimer. Part of the ribosomal stalk of the 50S ribosomal subunit. Forms a multimeric L10(L12)X complex, where L10 forms an elongated spine to which 2 to 4 L12 dimers bind in a sequential fashion. Binds GTP-bound translation factors.

Forms part of the ribosomal stalk which helps the ribosome interact with GTP-bound translation factors. Is thus essential for accurate translation. The polypeptide is Large ribosomal subunit protein bL12 (Clavibacter michiganensis subsp. michiganensis (strain NCPPB 382)).